Consider the following 266-residue polypeptide: NADH dehydrogenase [ubiquinone] iron-sulfur protein 3, mitochondrial (266 aa).

A mitochondrion-targeting transit peptide spans 1 to 38 (MAAAVAAAARGCWQRLVGSAAPARVAGRPSVLLLPVRR).

Belongs to the complex I 30 kDa subunit family. In terms of assembly, core subunit of respiratory chain NADH dehydrogenase (Complex I) which is composed of 45 different subunits. Interacts with NDUFAF3. Interacts with RAB5IF. Found in subcomplexes containing subunits NDUFS2, MT-ND1 and NDUFA13.

Its subcellular location is the mitochondrion inner membrane. The catalysed reaction is a ubiquinone + NADH + 5 H(+)(in) = a ubiquinol + NAD(+) + 4 H(+)(out). Core subunit of the mitochondrial membrane respiratory chain NADH dehydrogenase (Complex I) which catalyzes electron transfer from NADH through the respiratory chain, using ubiquinone as an electron acceptor. Essential for the catalytic activity and assembly of complex I. This Bos taurus (Bovine) protein is NADH dehydrogenase [ubiquinone] iron-sulfur protein 3, mitochondrial (NDUFS3).